A 376-amino-acid chain; its full sequence is Lysocardiolipin acyltransferase 1 (376 aa).

The chain crosses the membrane as a helical span at residues 9–29; that stretch reads FILFLFAGSFFGSIFMLGPIL. Asparagine 35 is a glycosylation site (N-linked (GlcNAc...) asparagine). A helical membrane pass occupies residues 48 to 68; that stretch reads ATWLTLPVALLETMFGVRVVI. The short motif at 85–90 is the HXXXXD motif element; that stretch reads HRTRVD. An N6-acetyllysine modification is found at lysine 183. Transmembrane regions (helical) follow at residues 309–329 and 336–356; these read LLSI…IYLY and FIIS…LEII.

Belongs to the 1-acyl-sn-glycerol-3-phosphate acyltransferase family. Widely expressed with highest expression in heart, liver and 12.5 dpc aorta-gonad-mesonephros and lower levels in the 16 dpc fetal liver and adult bone marrow. In bone marrow, highest levels are found in B-cells compared with whole bone marrow, T-cells, erythrocytes, and granulocytes.

Its subcellular location is the endoplasmic reticulum membrane. The enzyme catalyses a 1-acyl-sn-glycero-3-phosphate + an acyl-CoA = a 1,2-diacyl-sn-glycero-3-phosphate + CoA. It carries out the reaction a 1-acyl-sn-glycero-3-phospho-(1D-myo-inositol) + an acyl-CoA = a 1,2-diacyl-sn-glycero-3-phospho-(1D-myo-inositol) + CoA. The catalysed reaction is 1-acyl-sn-glycero-3-phospho-(1'-sn-glycerol) + an acyl-CoA = a 1,2-diacyl-sn-glycero-3-phospho-(1'-sn-glycerol) + CoA. It catalyses the reaction 1-hexadecanoyl-sn-glycero-3-phosphate + (9Z)-octadecenoyl-CoA = 1-hexadecanoyl-2-(9Z-octadecenoyl)-sn-glycero-3-phosphate + CoA. The enzyme catalyses 1-(9Z-octadecenoyl)-sn-glycero-3-phosphate + (9Z)-octadecenoyl-CoA = 1,2-di-(9Z-octadecenoyl)-sn-glycero-3-phosphate + CoA. It carries out the reaction 1-(9Z,12Z)-octadecadienoyl-sn-glycero-3-phosphate + (9Z)-octadecenoyl-CoA = 1-(9Z,12Z)-octadecadienoyl-2-(9Z)-octadecenoyl-sn-glycero-3-phosphate + CoA. The catalysed reaction is 1-(9Z,12Z,15Z)-octadecatrienoyl-sn-glycero-3-phosphate + (9Z)-octadecenoyl-CoA = 1-(9Z,12Z,15Z)-octadecatrienoyl-2-(9Z)-octadecenoyl-sn-glycero-3-phosphate + CoA. It catalyses the reaction 1-(9Z-octadecenoyl)-sn-glycero-3-phosphate + hexadecanoyl-CoA = 1-(9Z)-octadecenoyl-2-hexadecanoyl-sn-glycero-3-phosphate + CoA. The enzyme catalyses 1-(9Z-octadecenoyl)-sn-glycero-3-phosphate + octadecanoyl-CoA = 1-(9Z-octadecenoyl)-2-octadecanoyl-sn-glycero-3-phosphate + CoA. It carries out the reaction 1-acyl-sn-glycero-3-phospho-(1'-sn-glycerol) + (9Z)-octadecenoyl-CoA = 1-acyl-2-(9Z-octadecenoyl)-sn-glycero-3-phospho-(1'-sn-glycerol) + CoA. The catalysed reaction is a 1-acyl-sn-glycero-3-phospho-(1D-myo-inositol) + (9Z)-octadecenoyl-CoA = a 1-acyl-2-(9Z-octadecenoyl)-sn-glycero-3-phospho-(1D-myo-inositol) + CoA. It catalyses the reaction 1-hexadecanoyl-sn-glycero-3-phospho-(1D-myo-inositol) + hexadecanoyl-CoA = 1,2-dihexadecanoyl-sn-glycero-3-phospho-(1D-myo-inositol) + CoA. The enzyme catalyses 1-hexadecanoyl-sn-glycero-3-phospho-(1D-myo-inositol) + octadecanoyl-CoA = 1-hexadecanoyl-2-octadecanoyl-sn-glycero-3-phospho-(1D-myo-inositol) + CoA. It carries out the reaction 1-hexadecanoyl-sn-glycero-3-phospho-(1D-myo-inositol) + (9Z)-octadecenoyl-CoA = 1-hexadecanoyl-2-(9Z-octadecenoyl)-sn-glycero-3-phospho-(1D-myo-inositol) + CoA. The catalysed reaction is 1-hexadecanoyl-sn-glycero-3-phospho-(1D-myo-inositol) + (9Z,12Z)-octadecadienoyl-CoA = 1-hexadecanoyl-2-(9Z,12Z-octadecadienoyl)-sn-glycero-3-phospho-(1D-myo-inositol) + CoA. It catalyses the reaction 1-hexadecanoyl-sn-glycero-3-phospho-(1D-myo-inositol) + (5Z,8Z,11Z,14Z)-eicosatetraenoyl-CoA = 1-hexadecanoyl-2-(5Z,8Z,11Z,14Z-eicosatetraenoyl)-sn-glycero-3-phospho-D-myo-inositol + CoA. The enzyme catalyses 1-hexadecanoyl-sn-glycero-3-phospho-(1'-sn-glycerol) + hexadecanoyl-CoA = 1,2-dihexadecanoyl-sn-glycero-3-phospho-(1'-sn-glycerol) + CoA. It carries out the reaction 1-hexadecanoyl-sn-glycero-3-phospho-(1'-sn-glycerol) + octadecanoyl-CoA = 1-hexadecanoyl-2-octadecanoyl-sn-glycero-3-phospho-(1'-sn-glycerol) + CoA. The catalysed reaction is 1-hexadecanoyl-sn-glycero-3-phospho-(1'-sn-glycerol) + (9Z)-octadecenoyl-CoA = 1-hexadecanoyl-2-(9Z-octadecenoyl)-sn-glycero-3-phospho-(1'-sn-glycerol) + CoA. It catalyses the reaction 1-hexadecanoyl-sn-glycero-3-phospho-(1'-sn-glycerol) + (9Z,12Z)-octadecadienoyl-CoA = 1-hexadecanoyl-2-(9Z,12Z-octadecadienoyl)-sn-glycero-3-phospho-(1'-sn-glycerol) + CoA. The enzyme catalyses 1-tetradecanoyl-sn-glycero-3-phospho-(1'-sn-glycerol) + (9Z)-octadecenoyl-CoA = 1-tetradecanoyl-2-(9Z-octadecenoyl)-sn-glycero-3-phospho-(1'-sn-glycerol) + CoA. It carries out the reaction 1-octadecanoyl-sn-glycero-3-phospho-(1'-sn-glycerol) + (9Z)-octadecenoyl-CoA = 1-octadecanoyl-2-(9Z-octadecenoyl)-sn-glycero-3-phospho-(1'-sn-glycerol) + CoA. The catalysed reaction is 1-(9Z-octadecenoyl)-sn-glycero-3-phospho-(1'-sn-glycerol) + (9Z)-octadecenoyl-CoA = 1,2-di-(9Z-octadecenoyl)-sn-glycero-3-phospho-(1'-sn-glycerol) + CoA. It catalyses the reaction 1-hexadecanoyl-sn-glycero-3-phospho-(1D-myo-inositol) + dodecanoyl-CoA = 1-hexadecanoyl-2-dodecanoyl-sn-glycero-3-phospho-(1D-myo-inositol) + CoA. The enzyme catalyses 1',3'-bis-[1-acyl-sn-glycero-3-phospho]-glycerol + (9Z)-octadecenoyl-CoA = 1'-[1-acyl-2-(9Z)-octadecenoyl-sn-glycero-3-phospho],3'-[1-acyl,2-hydroxy-sn-glycero-3-phospho]-glycerol + CoA. It carries out the reaction 1'-[1,2-diacyl-sn-glycero-3-phospho],3'-[1-acyl-sn-glycero-3-phospho]-glycerol + (9Z)-octadecenoyl-CoA = 1'-[1,2-diacyl-sn-glycero-3-phospho],3'-[1-acyl,2-(9Z)-octadecenoyl-sn-glycero-3-phospho]-glycerol + CoA. The catalysed reaction is 1'-[1,2-diacyl-sn-glycero-3-phospho],3'-[1-acyl-sn-glycero-3-phospho]-glycerol + (9Z,12Z)-octadecadienoyl-CoA = 1'-[1,2-diacyl-sn-glycero-3-phospho],3'-[1-acyl,2-(9Z,12Z)-octadecadienoyl-sn-glycero-3-phospho]-glycerol + CoA. It catalyses the reaction 1'-[1,2-diacyl-sn-glycero-3-phospho],3'-[1-acyl-sn-glycero-3-phospho]-glycerol + dodecanoyl-CoA = 1'-[1,2-diacyl-sn-glycero-3-phospho],3'-[1-acyl,2-dodecanoyl-sn-glycero-3-phospho]-glycerol + CoA. The enzyme catalyses 1',3'-bis-[1-acyl-sn-glycero-3-phospho]-glycerol + dodecanoyl-CoA = 1'-[1-acyl-2-dodecanoyl-sn-glycero-3-phospho],3'-[1-acyl,2-hydroxy-sn-glycero-3-phospho]-glycerol + CoA. It carries out the reaction a 1-acyl-sn-glycero-3-phosphate + (9Z)-octadecenoyl-CoA = a 1-acyl-2-(9Z-octadecenoyl)-sn-glycero-3-phosphate + CoA. The catalysed reaction is 1',3'-bis-[1-acyl-sn-glycero-3-phospho]-glycerol + (9Z,12Z)-octadecadienoyl-CoA = 1'-[1-acyl-2-(9Z,12Z)-octadecadienoyl-sn-glycero-3-phospho],3'-[1-acyl,2-hydroxy-sn-glycero-3-phospho]-glycerol + CoA. It catalyses the reaction 1',3'-bis-[1-acyl-sn-glycero-3-phospho]-glycerol + hexadecanoyl-CoA = 1'-[1-acyl-2-hexadecanoyl-sn-glycero-3-phospho],3'-[1-acyl,2-hydroxy-sn-glycero-3-phospho]-glycerol + CoA. The enzyme catalyses 1',3'-bis-[1-acyl-sn-glycero-3-phospho]-glycerol + octadecanoyl-CoA = 1'-[1-acyl-2-octadecanoyl-sn-glycero-3-phospho],3'-[1-acyl,2-hydroxy-sn-glycero-3-phospho]-glycerol + CoA. It carries out the reaction 1'-[1,2-diacyl-sn-glycero-3-phospho],3'-[1-acyl-sn-glycero-3-phospho]-glycerol + octanoyl-CoA = 1'-[1,2-diacyl-sn-glycero-3-phospho],3'-[1-acyl,2-octanoyl-sn-glycero-3-phospho]-glycerol + CoA. The catalysed reaction is 1',3'-bis-[1-acyl-sn-glycero-3-phospho]-glycerol + octanoyl-CoA = 1'-[1-acyl-2-octanoyl-sn-glycero-3-phospho],3'-[1-acyl,2-hydroxy-sn-glycero-3-phospho]-glycerol + CoA. It catalyses the reaction 1'-[1,2-diacyl-sn-glycero-3-phospho],3'-[1-acyl-sn-glycero-3-phospho]-glycerol + hexadecanoyl-CoA = 1'-[1,2-diacyl-sn-glycero-3-phospho],3'-[1-acyl,2-hexadecanoyl-sn-glycero-3-phospho]-glycerol + CoA. The enzyme catalyses 1'-[1,2-diacyl-sn-glycero-3-phospho],3'-[1-acyl-sn-glycero-3-phospho]-glycerol + (5Z,8Z,11Z,14Z)-eicosatetraenoyl-CoA = 1'-[1,2-diacyl-sn-glycero-3-phospho],3'-[1-acyl,2-(5Z,8Z,11Z,14Z)-eicosatetraenoyl-sn-glycero-3-phospho]-glycerol + CoA. It carries out the reaction 1',3'-bis-[1-acyl-sn-glycero-3-phospho]-glycerol + (5Z,8Z,11Z,14Z)-eicosatetraenoyl-CoA = 1'-[1-acyl-2-(5Z,8Z,11Z,14Z)-eicosatetraenoyl-sn-glycero-3-phospho],3'-[1-acyl,2-hydroxy-sn-glycero-3-phospho]-glycerol + CoA. The catalysed reaction is a 1-acyl-sn-glycero-3-phospho-(1D-myo-inositol) + octadecanoyl-CoA = a 1-acyl-2-octadecanoyl-sn-glycero-3-phospho-(1D-myo-inositol) + CoA. It catalyses the reaction a 2-acyl-sn-glycero-3-phospho-D-myo-inositol + octadecanoyl-CoA = 1-octadecanoyl-2-acyl-sn-glycero-3-phospho-1D-myo-inositol + CoA. It participates in phospholipid metabolism; CDP-diacylglycerol biosynthesis; CDP-diacylglycerol from sn-glycerol 3-phosphate: step 2/3. Exhibits acyl-CoA:lysocardiolipin acyltransferase (ALCAT) activity; catalyzes the reacylation of lyso-cardiolipin to cardiolipin (CL), a key step in CL remodeling. Recognizes both monolysocardiolipin and dilysocardiolipin as substrates with a preference for linoleoyl-CoA and oleoyl-CoA as acyl donors. Also exhibits 1-acyl-sn-glycerol-3-phosphate acyltransferase activity (AGPAT) activity; converts 1-acyl-sn-glycerol-3- phosphate (lysophosphatidic acid or LPA) into 1,2-diacyl-sn-glycerol-3- phosphate (phosphatidic acid or PA) by incorporating an acyl moiety at the sn-2 position of the glycerol backbone. Possesses lysophosphatidylinositol acyltransferase (LPIAT) activity. Possesses lysophosphatidylglycerol acyltransferase (LPGAT) activity. Required for establishment of the hematopoietic and endothelial lineages. In Mus musculus (Mouse), this protein is Lysocardiolipin acyltransferase 1 (Lclat1).